A 445-amino-acid chain; its full sequence is RNA pseudouridine synthase 2, chloroplastic (445 aa).

A chloroplast-targeting transit peptide spans 1–44 (MATTAAASPPAIATALSALLRRQRRRSSRCVGASHARCLAADAN). A disordered region spans residues 47-66 (AVAPSRRGGHGGTRLEEAVP). Residues 72–147 (SRIDAWISAR…IPLDIVYEDD (76 aa)) form the S4 RNA-binding domain. Aspartate 235 is a catalytic residue.

This sequence belongs to the pseudouridine synthase RluA family.

The protein resides in the plastid. It localises to the chloroplast. It carries out the reaction a uridine in RNA = a pseudouridine in RNA. The sequence is that of RNA pseudouridine synthase 2, chloroplastic from Oryza sativa subsp. japonica (Rice).